Reading from the N-terminus, the 185-residue chain is Large ribosomal subunit protein uL22 (185 aa).

Positions 157 to 185 (VAAPSPEEDAPKKKQSKKKMARQKLMQRD) are disordered. The span at 169 to 178 (KKQSKKKMAR) shows a compositional bias: basic residues.

It belongs to the universal ribosomal protein uL22 family.

This chain is Large ribosomal subunit protein uL22 (RpL17), found in Ixodes scapularis (Black-legged tick).